Here is a 155-residue protein sequence, read N- to C-terminus: MAHEVKGEILGMLGEFKKFIARGNVLDLAVGVIIGGAFGKIVTSLTESVIMPVVGWLTGGVDFTRYFVRLGPVPADFKGDPTSYAELKAAGVPMIGYGDFITQAVNFVIVAFIIFLIVKAVNRMFEKPEEAPAAPSGPTEVELLAEIRDALKAKG.

2 helical membrane passes run V25–L45 and G98–V118.

Belongs to the MscL family. Homopentamer.

It is found in the cell inner membrane. Channel that opens in response to stretch forces in the membrane lipid bilayer. May participate in the regulation of osmotic pressure changes within the cell. The sequence is that of Large-conductance mechanosensitive channel from Novosphingobium aromaticivorans (strain ATCC 700278 / DSM 12444 / CCUG 56034 / CIP 105152 / NBRC 16084 / F199).